A 208-amino-acid chain; its full sequence is Ribosomal RNA large subunit methyltransferase E (208 aa).

Residues Gly-62, Trp-64, Asp-82, Asp-98, and Asp-123 each coordinate S-adenosyl-L-methionine. Lys-163 (proton acceptor) is an active-site residue.

The protein belongs to the class I-like SAM-binding methyltransferase superfamily. RNA methyltransferase RlmE family.

Its subcellular location is the cytoplasm. It carries out the reaction uridine(2552) in 23S rRNA + S-adenosyl-L-methionine = 2'-O-methyluridine(2552) in 23S rRNA + S-adenosyl-L-homocysteine + H(+). Functionally, specifically methylates the uridine in position 2552 of 23S rRNA at the 2'-O position of the ribose in the fully assembled 50S ribosomal subunit. The protein is Ribosomal RNA large subunit methyltransferase E of Actinobacillus pleuropneumoniae serotype 5b (strain L20).